We begin with the raw amino-acid sequence, 1217 residues long: Endonuclease YhcR (1217 aa).

The first 46 residues, 1 to 46 (MLSVEMISRQNRCHYVYKGGNMMRRILHIVLITALMFLNVMYTFEA), serve as a signal peptide directing secretion. In terms of domain architecture, TNase-like spans 376–517 (GEYEGIVDRV…KKDQKGIWNE (142 aa)). Catalysis depends on residues Arg-404, Glu-412, and Arg-460. The tract at residues 590–828 (LRILSMNDLH…VIFAAHNHQV (239 aa)) is phosphoesterase. Residues Asp-597, His-599, Asp-647, Asn-680, His-792, and His-824 each contribute to the a divalent metal cation site. A 5'-nucleotidase region spans residues 829–1085 (VNGEVNGKLI…AYTKEGRIKL (257 aa)). Substrate-binding positions include Phe-965 and 1035–1042 (FMATATGA). The segment at 1087 to 1142 (EASDIEDPVTEDPITEEPGDDPGTEDPIKEDPRPGEDLPDIKETPGTAPVHQLPPS) is disordered. Over residues 1089-1110 (SDIEDPVTEDPITEEPGDDPGT) the composition is skewed to acidic residues. The span at 1112 to 1129 (DPIKEDPRPGEDLPDIKE) shows a compositional bias: basic and acidic residues. The LPXTG sorting signal motif lies at 1182 to 1186 (LPDTS). Thr-1185 carries the pentaglycyl murein peptidoglycan amidated threonine modification. Residues 1186–1217 (SAGYYNFMVIGAAVTLSGTYLYVRRKRSASRT) constitute a propeptide, removed by sortase.

The protein in the C-terminal section; belongs to the 5'-nucleotidase family. The cofactor is Ca(2+). It depends on Mn(2+) as a cofactor.

It localises to the secreted. It is found in the cell wall. Its activity is regulated as follows. Requires a minimum of 0.1 mM of calcium for a significant activity. Maximal activity was observed with concentrations of calcium between 1 to 5 mM. Is 10-fold less active with the corresponding concentrations of manganese. Inhibited by NaCl at concentrations of 100 mM and higher. In terms of biological role, sugar-nonspecific endonuclease that yields nucleotide 3'-monophosphate products. No 5'-nucleotidase activity was detected, using 5'-AMP as the substrate, in the presence of diverse divalent metals and with various pH values. The chain is Endonuclease YhcR (yhcR) from Bacillus subtilis (strain 168).